A 143-amino-acid polypeptide reads, in one-letter code: Large ribosomal subunit protein uL11 (143 aa).

It belongs to the universal ribosomal protein uL11 family. Part of the ribosomal stalk of the 50S ribosomal subunit. Interacts with L10 and the large rRNA to form the base of the stalk. L10 forms an elongated spine to which L12 dimers bind in a sequential fashion forming a multimeric L10(L12)X complex. Post-translationally, one or more lysine residues are methylated.

Functionally, forms part of the ribosomal stalk which helps the ribosome interact with GTP-bound translation factors. This chain is Large ribosomal subunit protein uL11, found in Polynucleobacter necessarius subsp. necessarius (strain STIR1).